Reading from the N-terminus, the 332-residue chain is 2,3-diketo-L-gulonate reductase (332 aa).

The active-site Proton donor is His-44. Residues 168–174, 224–225, and 304–306 contribute to the NAD(+) site; these read ITMVDMS, WK, and GHE.

The protein belongs to the LDH2/MDH2 oxidoreductase family. DlgD subfamily. Homodimer.

Its subcellular location is the cytoplasm. The catalysed reaction is 3-dehydro-L-gulonate + NAD(+) = 2,3-dioxo-L-gulonate + NADH + H(+). It catalyses the reaction 3-dehydro-L-gulonate + NADP(+) = 2,3-dioxo-L-gulonate + NADPH + H(+). Its function is as follows. Catalyzes the reduction of 2,3-diketo-L-gulonate in the presence of NADH, to form 3-keto-L-gulonate. In Salmonella paratyphi A (strain ATCC 9150 / SARB42), this protein is 2,3-diketo-L-gulonate reductase.